Consider the following 550-residue polypeptide: Arginine--tRNA ligase (550 aa).

The 'HIGH' region motif lies at 130–140 (ANPTGPIHIGG).

Belongs to the class-I aminoacyl-tRNA synthetase family. Monomer.

Its subcellular location is the cytoplasm. The enzyme catalyses tRNA(Arg) + L-arginine + ATP = L-arginyl-tRNA(Arg) + AMP + diphosphate. The chain is Arginine--tRNA ligase (argS) from Mycobacterium leprae (strain TN).